The chain runs to 88 residues: Translation initiation factor IF-1 1 (88 aa).

The region spanning 1–72 (MAKEELIELD…TKGRINFRHK (72 aa)) is the S1-like domain.

The protein belongs to the IF-1 family. Component of the 30S ribosomal translation pre-initiation complex which assembles on the 30S ribosome in the order IF-2 and IF-3, IF-1 and N-formylmethionyl-tRNA(fMet); mRNA recruitment can occur at any time during PIC assembly.

Its subcellular location is the cytoplasm. In terms of biological role, one of the essential components for the initiation of protein synthesis. Stabilizes the binding of IF-2 and IF-3 on the 30S subunit to which N-formylmethionyl-tRNA(fMet) subsequently binds. Helps modulate mRNA selection, yielding the 30S pre-initiation complex (PIC). Upon addition of the 50S ribosomal subunit IF-1, IF-2 and IF-3 are released leaving the mature 70S translation initiation complex. In Burkholderia mallei (strain ATCC 23344), this protein is Translation initiation factor IF-1 1.